A 152-amino-acid chain; its full sequence is Protein-export protein SecB (152 aa).

Belongs to the SecB family. As to quaternary structure, homotetramer, a dimer of dimers. One homotetramer interacts with 1 SecA dimer.

The protein resides in the cytoplasm. In terms of biological role, one of the proteins required for the normal export of preproteins out of the cell cytoplasm. It is a molecular chaperone that binds to a subset of precursor proteins, maintaining them in a translocation-competent state. It also specifically binds to its receptor SecA. In Acinetobacter baumannii (strain AB307-0294), this protein is Protein-export protein SecB.